A 245-amino-acid polypeptide reads, in one-letter code: Octanoyltransferase (245 aa).

The region spanning 54–242 (QNAPEQVWLL…AFEQIFGPTI (189 aa)) is the BPL/LPL catalytic domain. Residues 93–100 (RGGEFTYH), 173–175 (AIG), and 186–188 (GVS) contribute to the substrate site. Cys204 acts as the Acyl-thioester intermediate in catalysis.

The protein belongs to the LipB family.

The protein localises to the cytoplasm. The catalysed reaction is octanoyl-[ACP] + L-lysyl-[protein] = N(6)-octanoyl-L-lysyl-[protein] + holo-[ACP] + H(+). The protein operates within protein modification; protein lipoylation via endogenous pathway; protein N(6)-(lipoyl)lysine from octanoyl-[acyl-carrier-protein]: step 1/2. Its function is as follows. Catalyzes the transfer of endogenously produced octanoic acid from octanoyl-acyl-carrier-protein onto the lipoyl domains of lipoate-dependent enzymes. Lipoyl-ACP can also act as a substrate although octanoyl-ACP is likely to be the physiological substrate. The polypeptide is Octanoyltransferase (Bartonella quintana (strain Toulouse) (Rochalimaea quintana)).